We begin with the raw amino-acid sequence, 468 residues long: Glutamate--tRNA ligase 2 (468 aa).

The 'HIGH' region signature appears at 9–19 (PSPTGSLHLGG). The 'KMSKS' region motif lies at 238-242 (KLSKR). K241 lines the ATP pocket.

The protein belongs to the class-I aminoacyl-tRNA synthetase family. Glutamate--tRNA ligase type 1 subfamily. As to quaternary structure, monomer.

The protein localises to the cytoplasm. It catalyses the reaction tRNA(Glu) + L-glutamate + ATP = L-glutamyl-tRNA(Glu) + AMP + diphosphate. Functionally, catalyzes the attachment of glutamate to tRNA(Glu) in a two-step reaction: glutamate is first activated by ATP to form Glu-AMP and then transferred to the acceptor end of tRNA(Glu). The chain is Glutamate--tRNA ligase 2 from Anaplasma phagocytophilum (strain HZ).